A 405-amino-acid polypeptide reads, in one-letter code: Macrolide efflux protein A (405 aa).

The next 11 helical transmembrane spans lie at 14–34 (IWAGQAVSLITSAILQMAIIF), 48–68 (MASLLGFLPYAVFGPAIGVLV), 76–98 (IMIGADLIIAAAGSVLTIVAFYM), 145–165 (SLQSISYIVSPAVAALLYSVW), 168–188 (NAIIAIDVLGAVIASITVAIV), 222–242 (FALLLVGTLYMFVYMPINALF), 259–279 (ITEISFASGMLIGGLLLGLFG), 285–305 (ILLITASIFMMGISLTISGLL), 310–330 (FFIFVVCCAIMGLSVPFYSGV), 350–370 (LTGSIMSLAMPIGLILSALFA), and 373–393 (IGVNHWFLLSGTLIICIAIVC).

The protein belongs to the major facilitator superfamily. Drug:H(+) antiporter-3 (DHA3) (TC 2.A.1.21) family.

The protein localises to the cell membrane. In terms of biological role, confers resistance to 14-membered macrolides including erythromycin and to 15-membered macrolides but not to 16-membered macrolides, lincosamides or analogs of streptogramin B. May function as an efflux pump to regulate intracellular macrolide levels. The chain is Macrolide efflux protein A from Streptococcus pyogenes serotype M6 (strain ATCC BAA-946 / MGAS10394).